Here is a 247-residue protein sequence, read N- to C-terminus: Adenylyl-sulfate kinase (247 aa).

The segment at 1–24 (MSQSNSDDSASSSTQQAGDGQDDV) is disordered. Residue 55–62 (GLSGCGKS) coordinates ATP. The active-site Phosphoserine intermediate is Ser146.

It belongs to the APS kinase family.

It catalyses the reaction adenosine 5'-phosphosulfate + ATP = 3'-phosphoadenylyl sulfate + ADP + H(+). It functions in the pathway sulfur metabolism; hydrogen sulfide biosynthesis; sulfite from sulfate: step 2/3. Catalyzes the synthesis of activated sulfate. The sequence is that of Adenylyl-sulfate kinase from Rhodopirellula baltica (strain DSM 10527 / NCIMB 13988 / SH1).